The sequence spans 91 residues: DNA-directed RNA polymerase subunit omega (91 aa).

This sequence belongs to the RNA polymerase subunit omega family. As to quaternary structure, the RNAP catalytic core consists of 2 alpha, 1 beta, 1 beta' and 1 omega subunit. When a sigma factor is associated with the core the holoenzyme is formed, which can initiate transcription.

The enzyme catalyses RNA(n) + a ribonucleoside 5'-triphosphate = RNA(n+1) + diphosphate. In terms of biological role, promotes RNA polymerase assembly. Latches the N- and C-terminal regions of the beta' subunit thereby facilitating its interaction with the beta and alpha subunits. In Nocardia farcinica (strain IFM 10152), this protein is DNA-directed RNA polymerase subunit omega.